The primary structure comprises 95 residues: Protein TusB (95 aa).

This sequence belongs to the DsrH/TusB family. As to quaternary structure, heterohexamer, formed by a dimer of trimers. The hexameric TusBCD complex contains 2 copies each of TusB, TusC and TusD. The TusBCD complex interacts with TusE.

It localises to the cytoplasm. Its function is as follows. Part of a sulfur-relay system required for 2-thiolation of 5-methylaminomethyl-2-thiouridine (mnm(5)s(2)U) at tRNA wobble positions. The protein is Protein TusB of Buchnera aphidicola subsp. Schizaphis graminum (strain Sg).